We begin with the raw amino-acid sequence, 400 residues long: Tryptophan synthase beta chain (400 aa).

Residue Lys90 is modified to N6-(pyridoxal phosphate)lysine.

This sequence belongs to the TrpB family. As to quaternary structure, tetramer of two alpha and two beta chains. Requires pyridoxal 5'-phosphate as cofactor.

It carries out the reaction (1S,2R)-1-C-(indol-3-yl)glycerol 3-phosphate + L-serine = D-glyceraldehyde 3-phosphate + L-tryptophan + H2O. It functions in the pathway amino-acid biosynthesis; L-tryptophan biosynthesis; L-tryptophan from chorismate: step 5/5. Its function is as follows. The beta subunit is responsible for the synthesis of L-tryptophan from indole and L-serine. This is Tryptophan synthase beta chain from Alkaliphilus metalliredigens (strain QYMF).